The chain runs to 204 residues: Recombination protein RecR (204 aa).

Residues 63 to 78 (CRRCFNITVGELCAIC) form a C4-type zinc finger. In terms of domain architecture, Toprim spans 86–181 (TKICVVEEPL…RVTRPARGLP (96 aa)).

It belongs to the RecR family.

Functionally, may play a role in DNA repair. It seems to be involved in an RecBC-independent recombinational process of DNA repair. It may act with RecF and RecO. This Chloroflexus aurantiacus (strain ATCC 29366 / DSM 635 / J-10-fl) protein is Recombination protein RecR.